The sequence spans 341 residues: ATP synthase subunit a 2 (341 aa).

Residues 1 to 33 (MKRVKVIQIKGFFRVMALLAPLLLNAYLPVQAS) form the signal peptide. 6 helical membrane passes run 112 to 132 (VVML…VGAA), 173 to 193 (LPYL…GLIP), 195 to 215 (GATA…TFFI), 242 to 262 (WIIM…ALTV), 273 to 293 (IVIL…VAAA), and 307 to 327 (IFVA…FIGL).

Belongs to the ATPase A chain family. In terms of assembly, F-type ATPases have 2 components, CF(1) - the catalytic core - and CF(0) - the membrane proton channel. CF(1) has five subunits: alpha(3), beta(3), gamma(1), delta(1), epsilon(1). CF(0) has four main subunits: a, b, b' and c.

It is found in the cell inner membrane. Functionally, key component of the proton channel; it plays a direct role in the translocation of protons across the membrane. The protein is ATP synthase subunit a 2 of Chlorobium luteolum (strain DSM 273 / BCRC 81028 / 2530) (Pelodictyon luteolum).